A 317-amino-acid polypeptide reads, in one-letter code: tRNA dimethylallyltransferase (317 aa).

An ATP-binding site is contributed by 18–25; the sequence is GPTATGKT. Position 20-25 (20-25) interacts with substrate; the sequence is TATGKT. 3 interaction with substrate tRNA regions span residues 43–46, 167–171, and 281–288; these read DSAL, QRIQR, and KRQITWLR.

It belongs to the IPP transferase family. In terms of assembly, monomer. Mg(2+) serves as cofactor.

It catalyses the reaction adenosine(37) in tRNA + dimethylallyl diphosphate = N(6)-dimethylallyladenosine(37) in tRNA + diphosphate. In terms of biological role, catalyzes the transfer of a dimethylallyl group onto the adenine at position 37 in tRNAs that read codons beginning with uridine, leading to the formation of N6-(dimethylallyl)adenosine (i(6)A). This chain is tRNA dimethylallyltransferase, found in Alkalilimnicola ehrlichii (strain ATCC BAA-1101 / DSM 17681 / MLHE-1).